Consider the following 287-residue polypeptide: Seed leukoagglutinin (287 aa).

An N-terminal signal peptide occupies residues 1–29 (MATSNSKPTQVLLATFLTFFFLLLNNVNS). Tyr74 serves as a coordination point for N-acetyl-alpha-neuraminyl-(2-&gt;3)-beta-D-galactosyl-(1-&gt;4)-beta-D-glucose. A glycan (N-linked (GlcNAc...) (paucimannose) asparagine) is linked at Asn90. 3 residues coordinate N-acetyl-alpha-neuraminyl-(2-&gt;3)-beta-D-galactosyl-(1-&gt;4)-beta-D-glucose: Asp116, Ser133, and Lys136. An N-linked (GlcNAc...) (paucimannose) asparagine glycan is attached at Asn142. Residues Glu156 and Asp158 each contribute to the Mn(2+) site. The Ca(2+) site is built by Asp158, Tyr160, Asp166, and Asp169. Tyr160 and Asp166 together coordinate N-acetyl-alpha-neuraminyl-(2-&gt;3)-beta-D-galactosyl-(1-&gt;4)-beta-D-glucose. Positions 169 and 174 each coordinate Mn(2+). Asn208 is a glycosylation site (N-linked (GlcNAc...) (high mannose) asparagine; partial). Asn220 is a glycosylation site (N-linked (GlcNAc...) (paucimannose) asparagine; partial). Glu253 contributes to the N-acetyl-alpha-neuraminyl-(2-&gt;3)-beta-D-galactosyl-(1-&gt;4)-beta-D-glucose binding site. The propeptide at 279–287 (NVHIARYTA) is removed in mature form.

It belongs to the leguminous lectin family. As to quaternary structure, homodimer; disulfide-linked. Dimer of homodimers. Post-translationally, the glycosylation on N-90 is determined to by of the high mannose type in PubMed:26003537, while PubMed:27720757 found a paucimannose at this position. Processed at its C-terminus.

Functionally, sialic acid-binding lectin recognizing oligosaccharides containing terminal sialic acid linked via alpha-2,3 bond to penultimate galactose residues. Binds the trisaccharide sequence Neu5Ac-alpha-2,3-Gal-beta-1,4-GlcNAc. Binds fetuin when fully glycosylated but not when the high mannose-type glycans are removed, although the secondary structure is virtually unaffected by deglycosylation of the high mannose-type glycans. The lectin activity may depend on the presence of a single GlcNAc attached to N-90. The chain is Seed leukoagglutinin from Maackia amurensis (Amur maackia).